Here is a 269-residue protein sequence, read N- to C-terminus: Iron(3+)-hydroxamate import ATP-binding protein FhuC (269 aa).

The ABC transporter domain occupies leucine 4 to aspartate 240. Residues glycine 36–serine 43 and leucine 160–aspartate 171 contribute to the ATP site.

Belongs to the ABC transporter superfamily. Iron (Fe3+)-hydroxamate importer (TC 3.A.1.14.7) family. In terms of assembly, the complex is composed of an ATP-binding protein (FhuC), two transmembrane proteins (FhuB and FhuG) and a solute-binding protein (FhuD or YxeB).

The protein resides in the cell membrane. The enzyme catalyses ATP + H2O + Fe(3+)-hydroxamate complex-[hydroxamate-binding protein]Side 1 = ADP + phosphate + Fe(3+)-hydroxamate complexSide 2 + [hydroxamate-binding protein]Side 1.. Its function is as follows. Part of the ABC transporter complex FhuBGCD involved in iron(3+)-hydroxamate import. Responsible for energy coupling to the transport system. The polypeptide is Iron(3+)-hydroxamate import ATP-binding protein FhuC (fhuC) (Bacillus subtilis (strain 168)).